We begin with the raw amino-acid sequence, 371 residues long: DNA replication and repair protein RecF (371 aa).

30–37 contacts ATP; that stretch reads GQNGSGKT.

It belongs to the RecF family.

The protein resides in the cytoplasm. Functionally, the RecF protein is involved in DNA metabolism; it is required for DNA replication and normal SOS inducibility. RecF binds preferentially to single-stranded, linear DNA. It also seems to bind ATP. This is DNA replication and repair protein RecF from Chlorobium phaeovibrioides (strain DSM 265 / 1930) (Prosthecochloris vibrioformis (strain DSM 265)).